The primary structure comprises 1040 residues: Multidrug resistance protein MdtB (1040 aa).

A run of 12 helical transmembrane segments spans residues phenylalanine 16–isoleucine 36, leucine 347–alanine 367, isoleucine 369–leucine 389, leucine 396–isoleucine 416, isoleucine 440–phenylalanine 460, phenylalanine 472–proline 492, tryptophan 537–isoleucine 557, leucine 863–isoleucine 883, phenylalanine 888–alanine 908, isoleucine 911–valine 931, isoleucine 968–valine 988, and isoleucine 998–isoleucine 1018.

It belongs to the resistance-nodulation-cell division (RND) (TC 2.A.6) family. MdtB subfamily. As to quaternary structure, part of a tripartite efflux system composed of MdtA, MdtB and MdtC. MdtB forms a heteromultimer with MdtC.

The protein resides in the cell inner membrane. Functionally, the MdtABC tripartite complex confers resistance against novobiocin and deoxycholate. This Escherichia fergusonii (strain ATCC 35469 / DSM 13698 / CCUG 18766 / IAM 14443 / JCM 21226 / LMG 7866 / NBRC 102419 / NCTC 12128 / CDC 0568-73) protein is Multidrug resistance protein MdtB.